We begin with the raw amino-acid sequence, 299 residues long: GTPase Era (299 aa).

The Era-type G domain occupies Arg5 to Glu172. Residues Gly13 to Ser20 are G1. Gly13 to Ser20 contributes to the GTP binding site. Residues Gln39–Asn43 are G2. Residues Asp60–Gly63 form a G3 region. Residues Asp60–Ile64 and Asn122–Asp125 each bind GTP. The G4 stretch occupies residues Asn122–Asp125. The segment at Val151–Ala153 is G5. In terms of domain architecture, KH type-2 spans Thr203–Lys280.

The protein belongs to the TRAFAC class TrmE-Era-EngA-EngB-Septin-like GTPase superfamily. Era GTPase family. In terms of assembly, monomer.

The protein resides in the cytoplasm. It is found in the cell membrane. An essential GTPase that binds both GDP and GTP, with rapid nucleotide exchange. Plays a role in 16S rRNA processing and 30S ribosomal subunit biogenesis and possibly also in cell cycle regulation and energy metabolism. The sequence is that of GTPase Era from Heliobacterium modesticaldum (strain ATCC 51547 / Ice1).